A 133-amino-acid chain; its full sequence is ATP synthase epsilon chain (133 aa).

The protein belongs to the ATPase epsilon chain family. In terms of assembly, F-type ATPases have 2 components, CF(1) - the catalytic core - and CF(0) - the membrane proton channel. CF(1) has five subunits: alpha(3), beta(3), gamma(1), delta(1), epsilon(1). CF(0) has three main subunits: a, b and c.

The protein resides in the cell membrane. Produces ATP from ADP in the presence of a proton gradient across the membrane. The chain is ATP synthase epsilon chain from Geobacillus thermodenitrificans (strain NG80-2).